A 388-amino-acid polypeptide reads, in one-letter code: Alanine racemase 1 (388 aa).

Catalysis depends on Lys40, which acts as the Proton acceptor; specific for D-alanine. N6-(pyridoxal phosphate)lysine is present on Lys40. Arg138 provides a ligand contact to substrate. The active-site Proton acceptor; specific for L-alanine is Tyr268. Met316 serves as a coordination point for substrate.

The protein belongs to the alanine racemase family. Requires pyridoxal 5'-phosphate as cofactor.

It carries out the reaction L-alanine = D-alanine. The protein operates within amino-acid biosynthesis; D-alanine biosynthesis; D-alanine from L-alanine: step 1/1. Its function is as follows. Catalyzes the interconversion of L-alanine and D-alanine. May also act on other amino acids. The protein is Alanine racemase 1 (alr1) of Caldanaerobacter subterraneus subsp. tengcongensis (strain DSM 15242 / JCM 11007 / NBRC 100824 / MB4) (Thermoanaerobacter tengcongensis).